The following is a 251-amino-acid chain: MRLHSLILLSFLLLATQAFSEKVRKRAKNAPHSTAEEGVEGSAPSLGKAQNKQRSRTSKSLTHGKFVTKDQATCRWAVTEEEQGISLKVQCTQADQEFSCVFAGDPTDCLKHDKDQIYWKQVARTLRKQKNICRNAKSVLKTRVCRKRFPESNLKLVNPNARGNTKPRKEKAEVSAREHNKVQEAVSTEPNRVKEDITLNPAATQTMAIRDPECLEDPDVLNQRKTALEFCGESWSSICTFFLNMLQATSC.

The first 20 residues, 1–20, serve as a signal peptide directing secretion; sequence MRLHSLILLSFLLLATQAFS. Residues 25 to 62 form a disordered region; it reads KRAKNAPHSTAEEGVEGSAPSLGKAQNKQRSRTSKSLT. Cystine bridges form between Cys74–Cys91, Cys100–Cys133, and Cys109–Cys145. The tract at residues 160–189 is disordered; sequence NARGNTKPRKEKAEVSAREHNKVQEAVSTE. The span at 170 to 182 shows a compositional bias: basic and acidic residues; it reads EKAEVSAREHNKV. O-linked (GalNAc...) serine glycosylation is present at Ser175. The segment at 210-251 is sufficient for interaction with FGF2 and FGF2-induced effects; it reads RDPECLEDPDVLNQRKTALEFCGESWSSICTFFLNMLQATSC. 2 cysteine pairs are disulfide-bonded: Cys214/Cys251 and Cys231/Cys239.

This sequence belongs to the fibroblast growth factor-binding protein family. As to quaternary structure, found in a complex with FGFBP1, FGF1 and FGF2. Interacts with FGF1, FGF7, FGF10, FGF22 and HSPG2. Interacts with FGF2. As to expression, expressed in intestine, ovary, lung, placenta and normal and wounded skin.

It localises to the secreted. Its subcellular location is the extracellular space. The protein localises to the cell membrane. Acts as a carrier protein that releases fibroblast-binding factors (FGFs) from the extracellular matrix (EM) storage and thus enhances the mitogenic activity of FGFs. Enhances FGF2 signaling during tissue repair, angiogenesis and in tumor growth. The chain is Fibroblast growth factor-binding protein 1 (Fgfbp1) from Mus musculus (Mouse).